Reading from the N-terminus, the 268-residue chain is Small ribosomal subunit protein uS2 (268 aa).

The tract at residues 228 to 268 is disordered; it reads QLDSEQDYEDFDESISDEYDDYEDEEEYEEQDLEVDASEDE. Residues 231 to 268 are compositionally biased toward acidic residues; the sequence is SEQDYEDFDESISDEYDDYEDEEEYEEQDLEVDASEDE.

This sequence belongs to the universal ribosomal protein uS2 family.

This Rippkaea orientalis (strain PCC 8801 / RF-1) (Cyanothece sp. (strain PCC 8801)) protein is Small ribosomal subunit protein uS2.